The chain runs to 162 residues: Probable chemoreceptor glutamine deamidase CheD 2 (162 aa).

This sequence belongs to the CheD family.

It catalyses the reaction L-glutaminyl-[protein] + H2O = L-glutamyl-[protein] + NH4(+). Its function is as follows. Probably deamidates glutamine residues to glutamate on methyl-accepting chemotaxis receptors (MCPs), playing an important role in chemotaxis. The protein is Probable chemoreceptor glutamine deamidase CheD 2 of Geobacter metallireducens (strain ATCC 53774 / DSM 7210 / GS-15).